A 230-amino-acid polypeptide reads, in one-letter code: Triosephosphate isomerase (230 aa).

Asn-9–Lys-11 is a substrate binding site. The active-site Electrophile is the His-93. Glu-141 serves as the catalytic Proton acceptor. Substrate-binding positions include Ile-146, Gly-180, and Ala-201–Ser-202.

Belongs to the triosephosphate isomerase family. As to quaternary structure, homotetramer; dimer of dimers.

It localises to the cytoplasm. The enzyme catalyses D-glyceraldehyde 3-phosphate = dihydroxyacetone phosphate. It functions in the pathway carbohydrate biosynthesis; gluconeogenesis. It participates in carbohydrate degradation; glycolysis; D-glyceraldehyde 3-phosphate from glycerone phosphate: step 1/1. Its function is as follows. Involved in the gluconeogenesis. Catalyzes stereospecifically the conversion of dihydroxyacetone phosphate (DHAP) to D-glyceraldehyde-3-phosphate (G3P). This Sulfolobus acidocaldarius (strain ATCC 33909 / DSM 639 / JCM 8929 / NBRC 15157 / NCIMB 11770) protein is Triosephosphate isomerase.